The chain runs to 263 residues: 3-methyl-2-oxobutanoate hydroxymethyltransferase (263 aa).

Residues D45 and D84 each coordinate Mg(2+). Residues 45–46 (DS), D84, and K112 each bind 3-methyl-2-oxobutanoate. Mg(2+) is bound at residue E114. Catalysis depends on E181, which acts as the Proton acceptor.

This sequence belongs to the PanB family. As to quaternary structure, homodecamer; pentamer of dimers. It depends on Mg(2+) as a cofactor.

The protein localises to the cytoplasm. The catalysed reaction is 3-methyl-2-oxobutanoate + (6R)-5,10-methylene-5,6,7,8-tetrahydrofolate + H2O = 2-dehydropantoate + (6S)-5,6,7,8-tetrahydrofolate. Its pathway is cofactor biosynthesis; (R)-pantothenate biosynthesis; (R)-pantoate from 3-methyl-2-oxobutanoate: step 1/2. Functionally, catalyzes the reversible reaction in which hydroxymethyl group from 5,10-methylenetetrahydrofolate is transferred onto alpha-ketoisovalerate to form ketopantoate. The polypeptide is 3-methyl-2-oxobutanoate hydroxymethyltransferase (Chromohalobacter salexigens (strain ATCC BAA-138 / DSM 3043 / CIP 106854 / NCIMB 13768 / 1H11)).